The primary structure comprises 85 residues: Dynein light chain 1, cytoplasmic (85 aa).

This sequence belongs to the dynein light chain family. As to quaternary structure, homodimer. Cytoplasmic dynein consists of two catalytic heavy chains (HCs) and a number of non-catalytic subunits which present intermediate chains (ICs), light intermediate chains (LICs) and light chains (LCs). Component of the nuclear pore complex (NPC). NPC constitutes the exclusive means of nucleocytoplasmic transport. NPCs allow the passive diffusion of ions and small molecules and the active, nuclear transport receptor-mediated bidirectional transport of macromolecules such as proteins, RNAs, ribonucleoparticles (RNPs), and ribosomal subunits across the nuclear envelope. Due to its 8-fold rotational symmetry, all subunits are present with 8 copies or multiples thereof.

The protein localises to the cytoplasm. It localises to the cytoskeleton. The protein resides in the nucleus. Its subcellular location is the nuclear pore complex. Functionally, acts as one of several non-catalytic accessory components of the cytoplasmic dynein complex that are thought to be involved in linking dynein to cargos and to adapter proteins that regulate dynein function. Cytoplasmic dynein 1 acts as a motor for the intracellular retrograde motility of vesicles and organelles along microtubules. May play a role in changing or maintaining the spatial distribution of cytoskeletal structures. Also a component of the nuclear pore complex. The sequence is that of Dynein light chain 1, cytoplasmic (dlc2) from Schizosaccharomyces pombe (strain 972 / ATCC 24843) (Fission yeast).